We begin with the raw amino-acid sequence, 217 residues long: Cytidylate kinase (217 aa).

11-19 (GPAGAGKST) is a binding site for ATP.

The protein belongs to the cytidylate kinase family. Type 1 subfamily.

The protein localises to the cytoplasm. It catalyses the reaction CMP + ATP = CDP + ADP. The catalysed reaction is dCMP + ATP = dCDP + ADP. The chain is Cytidylate kinase from Clostridium perfringens (strain SM101 / Type A).